Here is a 353-residue protein sequence, read N- to C-terminus: Pleckstrin-2 (353 aa).

The residue at position 1 (methionine 1) is an N-acetylmethionine. A PH 1 domain is found at glycine 4–histidine 104. Serine 120 bears the Phosphoserine mark. The DEP domain occupies threonine 139–glutamate 225. One can recognise a PH 2 domain in the interval threonine 247 to threonine 353.

As to expression, ubiquitous. Most abundant in the thymus, large bowel, small bowel, stomach, and prostate.

The protein resides in the cell projection. Its subcellular location is the lamellipodium membrane. It localises to the cytoplasm. The protein localises to the cytoskeleton. Functionally, may help orchestrate cytoskeletal arrangement. Contribute to lamellipodia formation. Overexpression of pleckstrin 2 causes large lamellipodia and peripheral ruffle formation. The sequence is that of Pleckstrin-2 (Plek2) from Mus musculus (Mouse).